A 563-amino-acid polypeptide reads, in one-letter code: Arginine--tRNA ligase (563 aa).

Positions 122–132 (PNIAKPISMGH) match the 'HIGH' region motif.

This sequence belongs to the class-I aminoacyl-tRNA synthetase family. In terms of assembly, monomer.

It localises to the cytoplasm. It catalyses the reaction tRNA(Arg) + L-arginine + ATP = L-arginyl-tRNA(Arg) + AMP + diphosphate. In Enterococcus faecalis (strain ATCC 700802 / V583), this protein is Arginine--tRNA ligase.